The sequence spans 335 residues: Fructose-1,6-bisphosphatase class 1 (335 aa).

Mg(2+) contacts are provided by Glu92, Asp115, Leu117, and Asp118. Substrate-binding positions include Asp118–Ser121, Asn211, Tyr244, Tyr262–Tyr264, and Lys274. Glu280 serves as a coordination point for Mg(2+).

Belongs to the FBPase class 1 family. Homotetramer. The cofactor is Mg(2+).

Its subcellular location is the cytoplasm. It catalyses the reaction beta-D-fructose 1,6-bisphosphate + H2O = beta-D-fructose 6-phosphate + phosphate. The protein operates within carbohydrate biosynthesis; gluconeogenesis. This chain is Fructose-1,6-bisphosphatase class 1, found in Teredinibacter turnerae (strain ATCC 39867 / T7901).